We begin with the raw amino-acid sequence, 720 residues long: Transcription factor bHLH155 (720 aa).

Residues 522-534 are compositionally biased toward polar residues; it reads YPSSSSDQFQTSL. Residues 522-558 form a disordered region; the sequence is YPSSSSDQFQTSLDIPKKNKKRAKPGESSRPRPRDRQ. Positions 540 to 547 match the Nuclear localization signal motif; sequence NKKRAKPG. Residues 544–593 form the bHLH domain; sequence AKPGESSRPRPRDRQLIQDRIKELRELVPNGSKCSIDSLLERTIKHMLFL. Residues 545–558 show a composition bias toward basic and acidic residues; that stretch reads KPGESSRPRPRDRQ.

Belongs to the bHLH protein family. LHW subfamily. Homodimer.

It is found in the nucleus. In terms of biological role, transcription factor that may regulate root development. This Arabidopsis thaliana (Mouse-ear cress) protein is Transcription factor bHLH155 (BHLH155).